A 473-amino-acid chain; its full sequence is Presenilin-B (473 aa).

The segment at 1 to 141 is disordered; that stretch reads MSSDNNNDPF…PLLNKKEKDD (141 aa). Residues 1 to 164 lie on the Cytoplasmic side of the membrane; sequence MSSDNNNDPF…DDEVSLQDFS (164 aa). The segment covering 22 to 46 has biased composition (polar residues); that stretch reads RVSTTTSPNRQSINSSPKQSSPKST. Low complexity predominate over residues 54–72; the sequence is NIILDLNDNNNDNNNTNNY. The segment covering 79–89 has biased composition (basic and acidic residues); it reads VDNKNKFENKD. A helical membrane pass occupies residues 165–185; that stretch reads SMIVSIIIPVSITMMAVVFFV. Residues 186 to 224 are Lumenal-facing; the sequence is KYLNNQTLYASTLSYTIAGGSSGGGSGADSITGNSFVDS. A glycan (N-linked (GlcNAc...) asparagine) is linked at Asn190. The chain crosses the membrane as a helical span at residues 225–245; that stretch reads LIVAGIVLGMIIVTTVAFVLL. Residues 246 to 252 are Cytoplasmic-facing; the sequence is YKYRCLK. The helical transmembrane segment at 253–273 threads the bilayer; sequence ILYGWLFLSVGMMLGSFGTTF. At 274 to 286 the chain is on the lumenal side; sequence FQAMLSAANLPLD. The chain crosses the membrane as a helical span at residues 287–307; sequence YITFAFLIFNFTVCGIIGVFW. A topological domain (cytoplasmic) is located at residue Tyr308. Residues 309 to 329 traverse the membrane as a helical segment; the sequence is AHQYVNQLYLVIISVLMAISL. The Lumenal portion of the chain corresponds to 330–334; the sequence is TRLPQ. Residues 335–355 form a helical membrane-spanning segment; the sequence is WTIFTLLVIVAIYDLFAVLCP. The active site involves Asp348. At 356 to 389 the chain is on the cytoplasmic side; the sequence is RGPLKVLVELSQERNENIPALVYETGKGSDSNLK. A helical membrane pass occupies residues 390-410; that stretch reads LGLGDFIFYSLLISRAALVHM. The active site involves Asp394. Residues 411 to 413 lie on the Lumenal side of the membrane; it reads SCV. A helical transmembrane segment spans residues 414-434; the sequence is FSTFIAILTGLFLTLLCLAIF. Residues 435 to 442 are Cytoplasmic-facing; it reads KKALPALP. Positions 439–441 match the PAL motif; that stretch reads PAL. An intramembrane region (helical) is located at residues 443 to 463; the sequence is ISIFLGILFYYLSNNFLTPFI. The Cytoplasmic segment spans residues 464-473; it reads EALTLSQIFV.

The protein belongs to the peptidase A22A family. In terms of assembly, homodimer. Component of the gamma-secretase complex, a complex composed of a presenilin homodimer, nicastrin, aph1 and pen2.

The protein resides in the endoplasmic reticulum membrane. It is found in the golgi apparatus membrane. Probable catalytic subunit of the gamma-secretase complex, an endoprotease complex that catalyzes the intramembrane cleavage of integral membrane proteins such as Notch receptors. Requires the other members of the gamma-secretase complex to have a protease activity. The sequence is that of Presenilin-B (psenB) from Dictyostelium discoideum (Social amoeba).